A 516-amino-acid polypeptide reads, in one-letter code: GMP synthase [glutamine-hydrolyzing] (516 aa).

Residues 8 to 198 (KILILDFGSQ…VVNICGCDTL (191 aa)) enclose the Glutamine amidotransferase type-1 domain. Residue Cys84 is the Nucleophile of the active site. Residues His172 and Glu174 contribute to the active site. A GMPS ATP-PPase domain is found at 199–391 (WNIENIIEND…LGLPYNMLYR (193 aa)). Position 226–232 (226–232 (SGGVDSS)) interacts with ATP.

As to quaternary structure, homodimer.

It catalyses the reaction XMP + L-glutamine + ATP + H2O = GMP + L-glutamate + AMP + diphosphate + 2 H(+). It participates in purine metabolism; GMP biosynthesis; GMP from XMP (L-Gln route): step 1/1. Its function is as follows. Catalyzes the synthesis of GMP from XMP. The chain is GMP synthase [glutamine-hydrolyzing] from Francisella tularensis subsp. novicida (strain U112).